The chain runs to 442 residues: 6-phospho-alpha-glucosidase 1 (442 aa).

6–72 (FSVLIAGGGS…PEVEFLATTD (67 aa)) serves as a coordination point for NAD(+). The substrate site is built by Arg95 and Asn149. Cys171 is a binding site for Mn(2+). Asp172 serves as the catalytic Proton donor. His202 is a binding site for Mn(2+). Tyr265 (proton acceptor) is an active-site residue. Arg285 provides a ligand contact to substrate.

This sequence belongs to the glycosyl hydrolase 4 family. As to quaternary structure, homodimer. May also form homotetramer. Mn(2+) is required as a cofactor. The cofactor is Co(2+). Requires Ni(2+) as cofactor. It depends on Fe(2+) as a cofactor. Mg(2+) serves as cofactor. NAD(+) is required as a cofactor.

It carries out the reaction alpha-maltose 6'-phosphate + H2O = D-glucose 6-phosphate + D-glucose. With respect to regulation, is inhibited by EDTA in vitro. In terms of biological role, is probably involved in the catabolism of alpha-glycosides accumulated via a phosphoenolpyruvate-dependent phosphotransferase system (PEP-PTS). Hydrolyzes a wide variety of 6-phospho-alpha-D-glucosides including the five isomeric derivatives of sucrose, i.e. trehalulose-6'-phosphate, turanose-6'-phosphate, maltulose-6'-phosphate, leucrose-6'-phosphate, and palatinose-6'-phosphate, but is not active on sucrose-6-phosphate. Can also hydrolyze maltose-6'-phosphate and methyl-alpha-glucose-6-phosphate, and poorly, trehalose-6-phosphate. Fails to hydrolyze beta-O-linked phosphorylated disaccharides such as cellobiose-6'-phosphate and gentiobiose-6'-phosphate. Does not seem to be involved in maltose catabolism. This Lacticaseibacillus paracasei (strain ATCC 334 / BCRC 17002 / CCUG 31169 / CIP 107868 / KCTC 3260 / NRRL B-441) (Lactobacillus paracasei) protein is 6-phospho-alpha-glucosidase 1 (simA).